Reading from the N-terminus, the 118-residue chain is Large ribosomal subunit protein uL24 (118 aa).

The interval 1–24 (MSEQPHKQRTRTKRASLHEKQDQV) is disordered.

The protein belongs to the universal ribosomal protein uL24 family. As to quaternary structure, part of the 50S ribosomal subunit.

Functionally, one of two assembly initiator proteins, it binds directly to the 5'-end of the 23S rRNA, where it nucleates assembly of the 50S subunit. Its function is as follows. Located at the polypeptide exit tunnel on the outside of the subunit. This is Large ribosomal subunit protein uL24 from Halobacterium salinarum (strain ATCC 700922 / JCM 11081 / NRC-1) (Halobacterium halobium).